The chain runs to 130 residues: Small ribosomal subunit protein uS8 (130 aa).

The protein belongs to the universal ribosomal protein uS8 family. In terms of assembly, part of the 30S ribosomal subunit. Contacts proteins S5 and S12.

Its function is as follows. One of the primary rRNA binding proteins, it binds directly to 16S rRNA central domain where it helps coordinate assembly of the platform of the 30S subunit. In Coxiella burnetii (strain Dugway 5J108-111), this protein is Small ribosomal subunit protein uS8.